The chain runs to 319 residues: Biotin synthase (319 aa).

Residues 41 to 267 (YKGNKVKVCS…TPDIMICGGR (227 aa)) form the Radical SAM core domain. [4Fe-4S] cluster contacts are provided by Cys59, Cys63, and Cys66. Residue Cys192 coordinates [2Fe-2S] cluster.

This sequence belongs to the radical SAM superfamily. Biotin synthase family. In terms of assembly, homodimer. The cofactor is [4Fe-4S] cluster. It depends on [2Fe-2S] cluster as a cofactor.

It catalyses the reaction (4R,5S)-dethiobiotin + (sulfur carrier)-SH + 2 reduced [2Fe-2S]-[ferredoxin] + 2 S-adenosyl-L-methionine = (sulfur carrier)-H + biotin + 2 5'-deoxyadenosine + 2 L-methionine + 2 oxidized [2Fe-2S]-[ferredoxin]. It functions in the pathway cofactor biosynthesis; biotin biosynthesis; biotin from 7,8-diaminononanoate: step 2/2. In terms of biological role, catalyzes the conversion of dethiobiotin (DTB) to biotin by the insertion of a sulfur atom into dethiobiotin via a radical-based mechanism. This is Biotin synthase from Endomicrobium trichonymphae.